We begin with the raw amino-acid sequence, 273 residues long: Small ribosomal subunit protein uS3 (273 aa).

The KH type-2 domain maps to Ile-43–Lys-111. Low complexity predominate over residues Gln-218–Gly-227. Residues Gln-218–Ala-273 form a disordered region. Over residues Arg-228–Asp-239 the composition is skewed to basic and acidic residues. Over residues Ala-249–Ala-273 the composition is skewed to low complexity.

It belongs to the universal ribosomal protein uS3 family. Part of the 30S ribosomal subunit. Forms a tight complex with proteins S10 and S14.

Functionally, binds the lower part of the 30S subunit head. Binds mRNA in the 70S ribosome, positioning it for translation. The chain is Small ribosomal subunit protein uS3 from Paenarthrobacter aurescens (strain TC1).